The primary structure comprises 58 residues: Large ribosomal subunit protein uL30 (58 aa).

It belongs to the universal ribosomal protein uL30 family. Part of the 50S ribosomal subunit.

In Buchnera aphidicola subsp. Baizongia pistaciae (strain Bp), this protein is Large ribosomal subunit protein uL30.